A 292-amino-acid polypeptide reads, in one-letter code: Ribosomal protein L11 methyltransferase (292 aa).

Residues Thr144, Gly165, Asp187, and Asn229 each contribute to the S-adenosyl-L-methionine site.

This sequence belongs to the methyltransferase superfamily. PrmA family.

Its subcellular location is the cytoplasm. The catalysed reaction is L-lysyl-[protein] + 3 S-adenosyl-L-methionine = N(6),N(6),N(6)-trimethyl-L-lysyl-[protein] + 3 S-adenosyl-L-homocysteine + 3 H(+). In terms of biological role, methylates ribosomal protein L11. The polypeptide is Ribosomal protein L11 methyltransferase (Pseudomonas fluorescens (strain SBW25)).